A 211-amino-acid polypeptide reads, in one-letter code: Small ribosomal subunit protein uS3 (211 aa).

The region spanning 16–85 (IDEYFKTKLV…NPQIEVKQVE (70 aa)) is the KH type-2 domain.

It belongs to the universal ribosomal protein uS3 family. Part of the 30S ribosomal subunit.

Binds the lower part of the 30S subunit head. This is Small ribosomal subunit protein uS3 from Methanococcus maripaludis (strain C7 / ATCC BAA-1331).